A 164-amino-acid chain; its full sequence is SsrA-binding protein (164 aa).

A disordered region spans residues 141–164; that stretch reads KLHDKRQDEKQKSIKKEINSALKR. Residues 145-158 are compositionally biased toward basic and acidic residues; that stretch reads KRQDEKQKSIKKEI.

It belongs to the SmpB family.

The protein resides in the cytoplasm. Functionally, required for rescue of stalled ribosomes mediated by trans-translation. Binds to transfer-messenger RNA (tmRNA), required for stable association of tmRNA with ribosomes. tmRNA and SmpB together mimic tRNA shape, replacing the anticodon stem-loop with SmpB. tmRNA is encoded by the ssrA gene; the 2 termini fold to resemble tRNA(Ala) and it encodes a 'tag peptide', a short internal open reading frame. During trans-translation Ala-aminoacylated tmRNA acts like a tRNA, entering the A-site of stalled ribosomes, displacing the stalled mRNA. The ribosome then switches to translate the ORF on the tmRNA; the nascent peptide is terminated with the 'tag peptide' encoded by the tmRNA and targeted for degradation. The ribosome is freed to recommence translation, which seems to be the essential function of trans-translation. This chain is SsrA-binding protein, found in Prochlorococcus marinus (strain MIT 9301).